A 69-amino-acid polypeptide reads, in one-letter code: Conotoxin Eb6.14 (69 aa).

A signal peptide spans 1–17 (VLIIAVLFLTACQLTTA). Positions 18–41 (ETYSRGRQKHRARRSTDKNSKWTR) are excised as a propeptide. Intrachain disulfides connect Cys43–Cys57, Cys50–Cys61, and Cys56–Cys68.

This sequence belongs to the conotoxin O1 superfamily. Expressed by the venom duct.

The protein resides in the secreted. The chain is Conotoxin Eb6.14 (E1) from Conus ebraeus (Hebrew cone).